Here is a 133-residue protein sequence, read N- to C-terminus: Aspartate 1-decarboxylase (133 aa).

The active-site Schiff-base intermediate with substrate; via pyruvic acid is the serine 26. Serine 26 is modified (pyruvic acid (Ser)). Threonine 58 is a binding site for substrate. The Proton donor role is filled by tyrosine 59. Residue 74 to 76 participates in substrate binding; sequence GAA.

Belongs to the PanD family. As to quaternary structure, heterooctamer of four alpha and four beta subunits. Pyruvate is required as a cofactor. Post-translationally, is synthesized initially as an inactive proenzyme, which is activated by self-cleavage at a specific serine bond to produce a beta-subunit with a hydroxyl group at its C-terminus and an alpha-subunit with a pyruvoyl group at its N-terminus.

Its subcellular location is the cytoplasm. It carries out the reaction L-aspartate + H(+) = beta-alanine + CO2. It participates in cofactor biosynthesis; (R)-pantothenate biosynthesis; beta-alanine from L-aspartate: step 1/1. Its function is as follows. Catalyzes the pyruvoyl-dependent decarboxylation of aspartate to produce beta-alanine. The sequence is that of Aspartate 1-decarboxylase from Legionella pneumophila subsp. pneumophila (strain Philadelphia 1 / ATCC 33152 / DSM 7513).